The chain runs to 274 residues: Halorhodopsin (274 aa).

The propeptide occupies Met1–Ala21. Residues Ala22–Glu25 lie on the Extracellular side of the membrane. The helical transmembrane segment at Asn26–Gly51 threads the bilayer. The Cytoplasmic portion of the chain corresponds to Arg52–Gly57. The chain crosses the membrane as a helical span at residues Arg58 to Leu81. The Extracellular portion of the chain corresponds to Ser82–Gln105. The chloride site is built by Gln105, Thr111, and Ser115. The chain crosses the membrane as a helical span at residues Trp106 to Ala127. At Asp128–Asp130 the chain is on the cytoplasmic side. Residues Leu131–Thr154 form a helical membrane-spanning segment. Residues Thr155 to Ala157 lie on the Extracellular side of the membrane. Residues Leu158–Val180 form a helical membrane-spanning segment. Residues Thr181–Thr192 are Cytoplasmic-facing. Residues Ala193–Val216 traverse the membrane as a helical segment. Residues Gly217–Ser226 are Extracellular-facing. A helical membrane pass occupies residues Val227–Asn255. Residue Lys242 is modified to N6-(retinylidene)lysine. Residues Asn256–Asp274 are Cytoplasmic-facing.

This sequence belongs to the archaeal/bacterial/fungal opsin family. In terms of assembly, homotrimer.

It is found in the cell membrane. Light-driven chloride pump. This is Halorhodopsin (hop) from Halobacterium salinarum (strain ATCC 29341 / DSM 671 / R1).